The sequence spans 2340 residues: Proto-oncogene tyrosine-protein kinase ROS (2340 aa).

A signal peptide spans 1–28; that stretch reads MKNICWLTLKLVKFVVLGCIIWISVAQS. Over 29–1854 the chain is Extracellular; the sequence is TVLSSCLTSC…EDGVWITETS (1826 aa). Asn53 carries an N-linked (GlcNAc...) asparagine glycan. Fibronectin type-III domains are found at residues 111 to 206 and 207 to 295; these read LPTA…VPET and APLI…PSPS. N-linked (GlcNAc...) asparagine glycosylation is found at Asn334 and Asn362. Residues 567 to 667 form the Fibronectin type-III 3 domain; sequence LPGHPQEVSV…APSVGTTLVP (101 aa). 2 N-linked (GlcNAc...) asparagine glycosylation sites follow: Asn935 and Asn1011. Fibronectin type-III domains lie at 943–1038 and 1039–1146; these read IPDP…SVPS and APEN…TSEI. N-linked (GlcNAc...) asparagine glycosylation is present at Asn1243. Fibronectin type-III domains follow at residues 1442-1549, 1550-1649, 1651-1744, and 1745-1846; these read ASDM…TKSG, VPGA…VNMF, TPEK…TKAG, and VPSK…LVED. Asn1676 carries N-linked (GlcNAc...) asparagine glycosylation. A helical transmembrane segment spans residues 1855-1875; it reads FILTIIVGIFLVATVPLTFVW. At 1876-2340 the chain is on the cytoplasmic side; the sequence is HRSLKSHKAS…AHSEHGDVSE (465 aa). Residues 1938-2216 enclose the Protein kinase domain; sequence LSLRLLLGSG…QLQLFRNVFL (279 aa). ATP-binding positions include 1944–1952 and Lys1973; that span reads LGSGAFGEV. The active-site Proton acceptor is Asp2072. 2 positions are modified to phosphotyrosine; by autocatalysis: Tyr2267 and Tyr2327.

Belongs to the protein kinase superfamily. Tyr protein kinase family. Insulin receptor subfamily. In terms of assembly, interacts with PTPN11; may activate the PI3 kinase-mTOR signaling pathway. Interacts with VAV3; constitutive interaction mediating VAV3 phosphorylation. Interacts with PTPN6 (via SH2 1 domain); the interaction is direct and promotes ROS1 dephosphorylation. In terms of processing, phosphorylated. Probably autophosphorylates. Phosphorylation at Tyr-2267 and/or Tyr-2327 recruits PTPN11. Phosphorylation at Tyr-2267 is required for the interaction with PTPN6 that mediates ROS1 dephosphorylation. Phosphorylation at Tyr-2267 stimulates the kinase activity and the activation of the ERK1 signaling cascade. In terms of tissue distribution, expressed by epithelial cells of the caput epididymis (at protein level).

The protein resides in the cell membrane. The enzyme catalyses L-tyrosyl-[protein] + ATP = O-phospho-L-tyrosyl-[protein] + ADP + H(+). With respect to regulation, inhibited by dephosphorylation by PTPN6. In terms of biological role, receptor tyrosine kinase (RTK) that plays a role in epithelial cell differentiation and regionalization of the proximal epididymal epithelium. NELL2 is an endogenous ligand for ROS1. Upon endogenous stimulation by NELL2, ROS1 activates the intracellular signaling pathway and triggers epididymal epithelial differentiation and subsequent sperm maturation. May activate several downstream signaling pathways related to cell differentiation, proliferation, growth and survival including the PI3 kinase-mTOR signaling pathway. Mediates the phosphorylation of PTPN11, an activator of this pathway. May also phosphorylate and activate the transcription factor STAT3 to control anchorage-independent cell growth. Mediates the phosphorylation and the activation of VAV3, a guanine nucleotide exchange factor regulating cell morphology. May activate other downstream signaling proteins including AKT1, MAPK1, MAPK3, IRS1, and PLCG2. This Mus musculus (Mouse) protein is Proto-oncogene tyrosine-protein kinase ROS (Ros1).